We begin with the raw amino-acid sequence, 692 residues long: Threonine--tRNA ligase (692 aa).

A disordered region spans residues 1–20 (MSAPAQPAPGVDGGDPSQAR). Residues 1-74 (MSAPAQPAPG…DVDTDITPVA (74 aa)) form the TGS domain. A catalytic region spans residues 269–575 (DHRKLGVELD…LTEHYAGAFP (307 aa)). Residues C374, H425, and H552 each contribute to the Zn(2+) site.

The protein belongs to the class-II aminoacyl-tRNA synthetase family. Homodimer. The cofactor is Zn(2+).

It localises to the cytoplasm. It carries out the reaction tRNA(Thr) + L-threonine + ATP = L-threonyl-tRNA(Thr) + AMP + diphosphate + H(+). In terms of biological role, catalyzes the attachment of threonine to tRNA(Thr) in a two-step reaction: L-threonine is first activated by ATP to form Thr-AMP and then transferred to the acceptor end of tRNA(Thr). Also edits incorrectly charged L-seryl-tRNA(Thr). This is Threonine--tRNA ligase from Mycobacterium tuberculosis (strain CDC 1551 / Oshkosh).